Here is a 199-residue protein sequence, read N- to C-terminus: Peptidyl-tRNA hydrolase (199 aa).

Tyrosine 15 lines the tRNA pocket. Catalysis depends on histidine 20, which acts as the Proton acceptor. 3 residues coordinate tRNA: tyrosine 66, asparagine 68, and asparagine 114.

The protein belongs to the PTH family. As to quaternary structure, monomer.

The protein resides in the cytoplasm. The catalysed reaction is an N-acyl-L-alpha-aminoacyl-tRNA + H2O = an N-acyl-L-amino acid + a tRNA + H(+). In terms of biological role, hydrolyzes ribosome-free peptidyl-tRNAs (with 1 or more amino acids incorporated), which drop off the ribosome during protein synthesis, or as a result of ribosome stalling. Catalyzes the release of premature peptidyl moieties from peptidyl-tRNA molecules trapped in stalled 50S ribosomal subunits, and thus maintains levels of free tRNAs and 50S ribosomes. The polypeptide is Peptidyl-tRNA hydrolase (Burkholderia cenocepacia (strain HI2424)).